The following is a 251-amino-acid chain: Demethylmenaquinone methyltransferase (251 aa).

S-adenosyl-L-methionine-binding positions include Thr66, Asp87, and 115–116; that span reads NA.

It belongs to the class I-like SAM-binding methyltransferase superfamily. MenG/UbiE family.

It catalyses the reaction a 2-demethylmenaquinol + S-adenosyl-L-methionine = a menaquinol + S-adenosyl-L-homocysteine + H(+). Its pathway is quinol/quinone metabolism; menaquinone biosynthesis; menaquinol from 1,4-dihydroxy-2-naphthoate: step 2/2. In terms of biological role, methyltransferase required for the conversion of demethylmenaquinol (DMKH2) to menaquinol (MKH2). The sequence is that of Demethylmenaquinone methyltransferase from Symbiobacterium thermophilum (strain DSM 24528 / JCM 14929 / IAM 14863 / T).